Consider the following 117-residue polypeptide: Large ribosomal subunit protein bL20 (117 aa).

It belongs to the bacterial ribosomal protein bL20 family.

Functionally, binds directly to 23S ribosomal RNA and is necessary for the in vitro assembly process of the 50S ribosomal subunit. It is not involved in the protein synthesizing functions of that subunit. In Rickettsia typhi (strain ATCC VR-144 / Wilmington), this protein is Large ribosomal subunit protein bL20.